The primary structure comprises 623 residues: Kelch repeat and BTB domain-containing protein 2 (623 aa).

The BTB domain maps to 31 to 98; that stretch reads TDIVLIVEGT…AYTGNLAMND (68 aa). Residues 133 to 229 enclose the BACK domain; sequence CVRLLSFADL…IRIDALSEVT (97 aa). Phosphoserine is present on S300. Kelch repeat units lie at residues 317 to 380, 381 to 429, 431 to 469, 470 to 529, and 535 to 581; these read DIYI…CCEG, YIYA…VVHD, IYVM…AFGD, KIFY…RAVV, and CVFM…DFRC.

As to quaternary structure, component of the BCR(KBTBD2) E3 ubiquitin ligase complex, at least composed of CUL3, KBTBD2 and RBX1. Interacts (via the BTB domain) with CUL3.

It participates in protein modification; protein ubiquitination. In terms of biological role, substrate-specific adapter of a BCR (BTB-CUL3-RBX1) E3 ubiquitin ligase complex that acts as a regulator of the insulin signaling pathway, modulating insulin sensitivity by limiting PIK3R1/p85alpha abundance in adipocytes. Targets PIK3R1, the regulatory subunit of phosphatidylinositol 3-kinase (PI3K), for 'Lys-48'-linked polyubiquitination and proteasome-mediated degradation. This chain is Kelch repeat and BTB domain-containing protein 2, found in Homo sapiens (Human).